Consider the following 223-residue polypeptide: Ethylene-inducing xylanase (223 aa).

The first 19 residues, 1–19, serve as a signal peptide directing secretion; sequence MVSFTTLLAGFVAVTGVLS. The 190-residue stretch at 34–223 folds into the GH11 domain; it reads QTIGPGTGFN…SSGNANINVS (190 aa). A glycan (N-linked (GlcNAc...) asparagine) is linked at asparagine 94. Glutamate 119 serves as the catalytic Nucleophile. The Proton donor role is filled by glutamate 210.

It belongs to the glycosyl hydrolase 11 (cellulase G) family. As to quaternary structure, interactc with tomato LeEix2 receptor to trigger its internalization.

It localises to the secreted. It catalyses the reaction Endohydrolysis of (1-&gt;4)-beta-D-xylosidic linkages in xylans.. The protein operates within glycan degradation; xylan degradation. Endo-1,4-beta-xylanase involved in the hydrolysis of xylan, a major structural heterogeneous polysaccharide found in plant biomass representing the second most abundant polysaccharide in the biosphere, after cellulose. Acts as an elicitor of plant defense responses in hosts such as tobacco (Nicotiana tabacum) or tomato (Solanum lycopersicum). Induces the production of ethylene and leads alterations in membrane function with rapid efflux of potassium, uptake of calcium, alkalization of the medium, increased leakage of cellular components and necrosis in plant hosts. EIX is translocated through the xylem of the host plant to the leaf mesophyll, leading to host response to pathogen-derived extracellular proteins in tissues distant from the invading pathogen. Greatly enhances the expression of two calcineurin B-like proteins-interacting protein kinases (CIPKs) family members, OsCIPK14 and OsCIPK15, in rice cultured cells. In tomato, triggers the defense response via binding to and subsequent internalization of the LeEix2 receptor. This Hypocrea rufa (Trichoderma viride) protein is Ethylene-inducing xylanase.